Here is a 445-residue protein sequence, read N- to C-terminus: KICSTOR subunit 2 (445 aa).

This sequence belongs to the KICS2 family. In terms of assembly, part of the KICSTOR complex composed of KPTN, ITFG2, KICS2 and SZT2. SZT2 probably serves as a link between the other three proteins in the KICSTOR complex and may mediate the direct interaction with the GATOR complex via GATOR1. The KICSTOR complex interacts directly with the GATOR1 complex and most probably indirectly with the GATOR2 complex in an amino acid-independent manner.

The protein resides in the lysosome membrane. Its function is as follows. As part of the KICSTOR complex functions in the amino acid-sensing branch of the TORC1 signaling pathway. Recruits, in an amino acid-independent manner, the GATOR1 complex to the lysosomal membranes and allows its interaction with GATOR2 and the RAG GTPases. Functions upstream of the RAG GTPases and is required to negatively regulate mTORC1 signaling in absence of amino acids. In absence of the KICSTOR complex mTORC1 is constitutively localized to the lysosome and activated. The KICSTOR complex is also probably involved in the regulation of mTORC1 by glucose. The sequence is that of KICSTOR subunit 2 from Mus musculus (Mouse).